The following is a 448-amino-acid chain: Nicotinate phosphoribosyltransferase pncB1 (448 aa).

A disordered region spans residues 1-21 (MGPPPAARRREGEPDNQDPAG). Residue His212 is modified to Phosphohistidine. Positions 353 to 372 (RSSYKESPGGRKEALRRSRA) are disordered.

This sequence belongs to the NAPRTase family. Post-translationally, transiently phosphorylated on a His residue during the reaction cycle. Phosphorylation strongly increases the affinity for substrates and increases the rate of nicotinate D-ribonucleotide production. Dephosphorylation regenerates the low-affinity form of the enzyme, leading to product release.

It catalyses the reaction nicotinate + 5-phospho-alpha-D-ribose 1-diphosphate + ATP + H2O = nicotinate beta-D-ribonucleotide + ADP + phosphate + diphosphate. It functions in the pathway cofactor biosynthesis; NAD(+) biosynthesis; nicotinate D-ribonucleotide from nicotinate: step 1/1. Involved in the Preiss-Handler pathway, which is a recycling route that permits the salvage of free nicotinamide (NM) and nicotinic acid (Na) involved in the NAD biosynthesis. Catalyzes the synthesis of beta-nicotinate D-ribonucleotide from nicotinate and 5-phospho-D-ribose 1-phosphate at the expense of ATP. It is not able to use nicotinamide. PncB1 contributes to basal NAD level. This chain is Nicotinate phosphoribosyltransferase pncB1 (pncB1), found in Mycobacterium tuberculosis (strain ATCC 25618 / H37Rv).